Reading from the N-terminus, the 1001-residue chain is Translation initiation factor IF-2 (1001 aa).

The tract at residues lysine 34 to glutamate 404 is disordered. Residues serine 67–glutamine 80 show a composition bias toward basic and acidic residues. 3 stretches are compositionally biased toward pro residues: residues proline 98–proline 107, proline 147–proline 157, and proline 163–proline 172. Residues alanine 173–alanine 190 are compositionally biased toward low complexity. Basic and acidic residues-rich tracts occupy residues serine 212 to valine 230 and proline 238 to proline 252. Positions aspartate 332–glycine 342 are enriched in acidic residues. Low complexity-rich tracts occupy residues lysine 362–proline 371 and alanine 385–arginine 394. Positions serine 395 to glutamate 404 are enriched in basic and acidic residues. In terms of domain architecture, tr-type G spans arginine 493 to valine 666. The tract at residues glycine 502–threonine 509 is G1. Glycine 502 to threonine 509 contributes to the GTP binding site. The G2 stretch occupies residues glycine 527–histidine 531. Residues aspartate 552–glycine 555 are G3. GTP is bound by residues aspartate 552–histidine 556 and asparagine 606–aspartate 609. The tract at residues asparagine 606–aspartate 609 is G4. Positions serine 642–leucine 644 are G5.

It belongs to the TRAFAC class translation factor GTPase superfamily. Classic translation factor GTPase family. IF-2 subfamily.

It is found in the cytoplasm. One of the essential components for the initiation of protein synthesis. Protects formylmethionyl-tRNA from spontaneous hydrolysis and promotes its binding to the 30S ribosomal subunits. Also involved in the hydrolysis of GTP during the formation of the 70S ribosomal complex. The protein is Translation initiation factor IF-2 (infB) of Synechocystis sp. (strain ATCC 27184 / PCC 6803 / Kazusa).